A 390-amino-acid chain; its full sequence is Mannitol-1-phosphate 5-dehydrogenase (390 aa).

7 to 18 (AVHFGGGNIGRG) contributes to the NAD(+) binding site. Lysine 216 is an active-site residue.

This sequence belongs to the mannitol dehydrogenase family. Monomer.

It catalyses the reaction D-mannitol 1-phosphate + NAD(+) = beta-D-fructose 6-phosphate + NADH + H(+). Its function is as follows. Catalyzes the NAD(H)-dependent interconversion of D-fructose 6-phosphate and D-mannitol 1-phosphate in the mannitol metabolic pathway. Required for the process of sporulation on senescing leaf material. The sequence is that of Mannitol-1-phosphate 5-dehydrogenase (mpd1) from Phaeosphaeria nodorum (strain SN15 / ATCC MYA-4574 / FGSC 10173) (Glume blotch fungus).